The sequence spans 1049 residues: Self-sufficient cytochrome P450 monooxygenase CYP505E4 (1049 aa).

Cys-405 is a binding site for heme. Residues 461–470 (SATALSQHNM) are compositionally biased toward polar residues. A disordered region spans residues 461–491 (SATALSQHNMSAGATASPGSSTHLAGDENGQ). Residues 471 to 482 (SAGATASPGSST) are compositionally biased toward low complexity. The region spanning 499-640 (ISFFYGSNSG…DLEVWEETNL (142 aa)) is the Flavodoxin-like domain. Residues 505-509 (SNSGT) and 584-616 (VFGC…TRLT) contribute to the FMN site. One can recognise an FAD-binding FR-type domain in the interval 678–906 (RDLVEGKVTA…RPAKDAFHLP (229 aa)).

The protein in the N-terminal section; belongs to the cytochrome P450 family. FAD serves as cofactor. FMN is required as a cofactor. It depends on heme as a cofactor.

The catalysed reaction is 2 oxidized [cytochrome P450] + NADPH = 2 reduced [cytochrome P450] + NADP(+) + H(+). It catalyses the reaction an organic molecule + reduced [NADPH--hemoprotein reductase] + O2 = an alcohol + oxidized [NADPH--hemoprotein reductase] + H2O + H(+). It carries out the reaction dodecanoate + reduced [NADPH--hemoprotein reductase] + O2 = 5-hydroxydodecanoate + oxidized [NADPH--hemoprotein reductase] + H2O + H(+). The enzyme catalyses dodecan-1-ol + reduced [NADPH--hemoprotein reductase] + O2 = 1,5-dodecanediol + oxidized [NADPH--hemoprotein reductase] + H2O + H(+). The catalysed reaction is dodecanoate + reduced [NADPH--hemoprotein reductase] + O2 = 9-hydroxydodecanoate + oxidized [NADPH--hemoprotein reductase] + H2O + H(+). It catalyses the reaction dodecan-1-ol + reduced [NADPH--hemoprotein reductase] + O2 = 1,4-dodecanediol + oxidized [NADPH--hemoprotein reductase] + H2O + H(+). It carries out the reaction dodecan-1-ol + reduced [NADPH--hemoprotein reductase] + O2 = 1,6-dodecanediol + oxidized [NADPH--hemoprotein reductase] + H2O + H(+). Self-sufficient cytochrome P450 monooxygenase that catalyzes the regioselective in-chain hydroxylation of alkanes, fatty alcohols, and fatty acids at the omega-7 position. Performs hydroxylation of C10-C16 n-alkanes and C12 and C14 fatty alcohols; and thereby enables the one step biocatalytic synthesis of rare alcohols such as 5-dodecanol and 7-tetradecanol. Converts 1-dodecanol into 1,5-dodecanediol as major product with very little sub-terminally hydroxylated products with the 1,4-dodecanediol and 1,6-dodecanediol more abundant. Converts dodecanoic acid to 5-hydroxydodecanoic acid which can be further converted into delta-dodecalactone by lactonization of the 5-hydroxy acid at low pH. Also gives sub-terminal hydroxylation of dodecanoic acid with 9-hydroxydodecanoic acid being the second most abundant product. Does not show any significant activity toward tetradecanoic acid. The polypeptide is Self-sufficient cytochrome P450 monooxygenase CYP505E4 (Penicillium camemberti (strain FM 013)).